We begin with the raw amino-acid sequence, 353 residues long: F-box protein At2g14290 (353 aa).

Residues 6-58 (PRTWSELPPDLLGSIFHRLSFTDFHRAKIVCWNWNLSSKLTVPKKIRSPWLML) enclose the F-box domain.

This chain is F-box protein At2g14290, found in Arabidopsis thaliana (Mouse-ear cress).